A 495-amino-acid polypeptide reads, in one-letter code: Meiosis-specific nuclear structural protein 1 (495 aa).

Residues 1-315 (MASIRRTLSF…RLEEMLRQRE (315 aa)) are interaction with BBOF1. Coiled coils occupy residues 61 to 215 (QDEQ…EKLM) and 245 to 361 (IEEF…QMAL). A disordered region spans residues 172–199 (EESAAEDKRNQAKAQYSHDLEKQLEEQG).

It belongs to the MNS1 family. Able to form oligomers. Microtubule inner protein component of sperm flagellar doublet microtubules. Interacts with ODAD1. Interacts with BBOF1. In terms of tissue distribution, expressed in trachea multiciliated cells.

It localises to the nucleus. The protein resides in the cytoplasm. It is found in the cytoskeleton. Its subcellular location is the cilium axoneme. The protein localises to the flagellum axoneme. In terms of biological role, microtubule inner protein (MIP) part of the dynein-decorated doublet microtubules (DMTs) in cilia axoneme, which is required for motile cilia beating. May play a role in the control of meiotic division and germ cell differentiation through regulation of pairing and recombination during meiosis. Required for sperm flagella assembly. May play a role in the assembly and function of the outer dynein arm-docking complex (ODA-DC). ODA-DC mediates outer dynein arms (ODA) binding onto the axonemal doublet microtubules. This chain is Meiosis-specific nuclear structural protein 1 (MNS1), found in Bos taurus (Bovine).